A 726-amino-acid chain; its full sequence is Probable dipeptidyl-peptidase 5 (726 aa).

The signal sequence occupies residues 1–19 (MAAAKWLIASLAFASSGLA). N-linked (GlcNAc...) asparagine glycosylation is found at Asn96 and Asn252. Positions 269–291 (AEPINKRNGPRTPQGIEGASSSP) are disordered. Asn485 carries an N-linked (GlcNAc...) asparagine glycan. The active-site Charge relay system is Ser558. An N-linked (GlcNAc...) asparagine glycan is attached at Asn605. Residues Asp641 and His673 each act as charge relay system in the active site. N-linked (GlcNAc...) asparagine glycosylation occurs at Asn699.

Belongs to the peptidase S9C family.

It localises to the secreted. Its function is as follows. Extracellular dipeptidyl-peptidase which removes N-terminal dipeptides sequentially from polypeptides having unsubstituted N-termini. Contributes to pathogenicity. This is Probable dipeptidyl-peptidase 5 (DPP5) from Arthroderma benhamiae (strain ATCC MYA-4681 / CBS 112371) (Trichophyton mentagrophytes).